The following is a 315-amino-acid chain: ATP synthase gamma chain (315 aa).

It belongs to the ATPase gamma chain family. F-type ATPases have 2 components, CF(1) - the catalytic core - and CF(0) - the membrane proton channel. CF(1) has five subunits: alpha(3), beta(3), gamma(1), delta(1), epsilon(1). CF(0) has three main subunits: a, b and c.

The protein localises to the cellular thylakoid membrane. Produces ATP from ADP in the presence of a proton gradient across the membrane. The gamma chain is believed to be important in regulating ATPase activity and the flow of protons through the CF(0) complex. This is ATP synthase gamma chain from Synechococcus sp. (strain RCC307).